The following is a 46-amino-acid chain: Photosystem II reaction center protein K (46 aa).

Residues 1–9 constitute a propeptide that is removed on maturation; sequence MESILMIFA. Residues 25 to 45 traverse the membrane as a helical segment; the sequence is LPVIPVLFLLLAFVWQAAVSF.

The protein belongs to the PsbK family. As to quaternary structure, PSII is composed of 1 copy each of membrane proteins PsbA, PsbB, PsbC, PsbD, PsbE, PsbF, PsbH, PsbI, PsbJ, PsbK, PsbL, PsbM, PsbT, PsbX, PsbY, PsbZ, Psb30/Ycf12, at least 3 peripheral proteins of the oxygen-evolving complex and a large number of cofactors. It forms dimeric complexes.

The protein resides in the plastid. It localises to the chloroplast thylakoid membrane. One of the components of the core complex of photosystem II (PSII). PSII is a light-driven water:plastoquinone oxidoreductase that uses light energy to abstract electrons from H(2)O, generating O(2) and a proton gradient subsequently used for ATP formation. It consists of a core antenna complex that captures photons, and an electron transfer chain that converts photonic excitation into a charge separation. This chain is Photosystem II reaction center protein K, found in Stigeoclonium helveticum (Green alga).